Here is a 307-residue protein sequence, read N- to C-terminus: Aspartate carbamoyltransferase catalytic subunit (307 aa).

Residues arginine 59 and threonine 60 each coordinate carbamoyl phosphate. Lysine 87 lines the L-aspartate pocket. 3 residues coordinate carbamoyl phosphate: arginine 109, histidine 137, and glutamine 140. The L-aspartate site is built by arginine 173 and arginine 223. 2 residues coordinate carbamoyl phosphate: glycine 266 and proline 267.

Belongs to the aspartate/ornithine carbamoyltransferase superfamily. ATCase family. Heterododecamer (2C3:3R2) of six catalytic PyrB chains organized as two trimers (C3), and six regulatory PyrI chains organized as three dimers (R2).

The enzyme catalyses carbamoyl phosphate + L-aspartate = N-carbamoyl-L-aspartate + phosphate + H(+). The protein operates within pyrimidine metabolism; UMP biosynthesis via de novo pathway; (S)-dihydroorotate from bicarbonate: step 2/3. Its function is as follows. Catalyzes the condensation of carbamoyl phosphate and aspartate to form carbamoyl aspartate and inorganic phosphate, the committed step in the de novo pyrimidine nucleotide biosynthesis pathway. The polypeptide is Aspartate carbamoyltransferase catalytic subunit (Helicobacter pylori (strain G27)).